Reading from the N-terminus, the 1734-residue chain is Gag-pol polyprotein (1734 aa).

Gly-2 carries N-myristoyl glycine; by host lipidation. Residues 109-112 (PTAP) carry the PTAP/PSAP motif motif. A disordered region spans residues 112–217 (PILPSGPSTQ…STTSRAFPLR (106 aa)). Positions 128 to 132 (LYPAF) match the LYPX(n)L motif motif. The PPXY motif signature appears at 161-164 (PPPY). The residue at position 191 (Ser-191) is a Phosphoserine; by host. Positions 344–392 (GRSPTNLAKVKGITQGPNESPSAFLERLKEAYRRYTPYDPEDPGQETNV) are interaction with host PIAS4. Residues 429 to 434 (IFNKRE) are interaction with host UBE2I. 2 stretches are compositionally biased toward basic and acidic residues: residues 433 to 474 (RETP…REMS) and 485 to 498 (RQDRQGGERRRPQL). 2 disordered regions span residues 433–498 (RETP…RPQL) and 512–551 (WAKDCPKKPRGPRGPRPQTSLLTLDDQGGQGQEPPPEPRI). Residues 501 to 518 (DQCAYCKEKGHWAKDCPK) form a CCHC-type zinc finger. The Peptidase A2 domain occupies 560 to 630 (VTFLVDTGAQ…CPYPLLGRDL (71 aa)). Catalysis depends on Asp-565, which acts as the Protease; shared with dimeric partner. Residues 740 to 931 (LDQGILVPCQ…KQVKYLGYLL (192 aa)) form the Reverse transcriptase domain. The Mg(2+) site is built by Asp-808, Asp-882, Asp-883, Asp-1182, Glu-1220, Asp-1241, and Asp-1311. The RNase H type-1 domain occupies 1173–1319 (PDADHTWYTD…ADQAAREAAI (147 aa)). Residues 1386–1426 (HRLTHLGYQKMKALLDRGESPYYMLNRDKTLQYVADSCTVC) form an HHCC-type zinc finger. In terms of domain architecture, Integrase catalytic spans 1443–1601 (RGHRPGTHWE…TPYEILYGAP (159 aa)). Asp-1454 and Asp-1513 together coordinate Mg(2+).

Homohexamer; further associates as homomultimer. The virus core is composed of a lattice formed from hexagonal rings, each containing six capsid monomers. Interacts with mouse UBE2I and mouse PIAS4. In terms of assembly, interacts (via PPXY motif) with host NEDD4. Interacts (via PSAP motif) with host TSG101. Interacts (via LYPX(n)L motif) with host PDCD6IP. As to quaternary structure, the reverse transcriptase is a monomer (Potential). Interacts (via RNase domains) with host release factor ETF1; this interaction is essential for translational readthrough of amber codon between viral gag and pol genes, as well as for viral replication. Homodimer. Mg(2+) is required as a cofactor. Post-translationally, ubiquitinated by ITCH. Gag can recruit the ubiquitin ligase Itch in an L domain-independent manner to facilitate virus release via a mechanism that involves Gag ubiquitination. In terms of processing, specific enzymatic cleavages by the viral protease yield mature proteins. The protease is released by autocatalytic cleavage. The polyprotein is cleaved during and after budding, this process is termed maturation. Sumoylated; which is required for virus replication. Post-translationally, phosphorylated on serine residues.

Its subcellular location is the virion. It is found in the host cell membrane. The protein localises to the host late endosome membrane. The protein resides in the host endosome. It localises to the host multivesicular body. Its subcellular location is the host cytoplasm. It catalyses the reaction DNA(n) + a 2'-deoxyribonucleoside 5'-triphosphate = DNA(n+1) + diphosphate. It carries out the reaction Endonucleolytic cleavage to 5'-phosphomonoester.. With respect to regulation, most efficiently inhibited by Amprenavir, which is able to block Gag-Pol processing in infected cells. Plays a role in budding and is processed by the viral protease during virion maturation outside the cell. During budding, it recruits, in a PPXY-dependent or independent manner, Nedd4-like ubiquitin ligases that conjugate ubiquitin molecules to Gag-Pol, or to Gag-Pol binding host factors. Interaction with HECT ubiquitin ligases probably links the viral protein to the host ESCRT pathway and facilitates release. Functionally, targets Gag and gag-pol polyproteins to the plasma membrane via a multipartite membrane binding signal, that includes its myristoylated N-terminus. Also mediates nuclear localization of the pre-integration complex. In terms of biological role, constituent of the pre-integration complex (PIC) which tethers the latter to mitotic chromosomes. This allows the integration of the viral genome into the host DNA. Its function is as follows. Forms the spherical core of the virion that encapsulates the genomic RNA-nucleocapsid complex. Involved in the packaging and encapsidation of two copies of the genome. Binds with high affinity to conserved UCUG elements within the packaging signal, located near the 5'-end of the genome. This binding is dependent on genome dimerization. Acts as a nucleic acid chaperone which is involved in rearrangement of nucleic acid secondary structures during gRNA retrotranscription. Functionally, the aspartyl protease mediates proteolytic cleavages of Gag and Gag-Pol polyproteins during or shortly after the release of the virion from the plasma membrane. Cleavages take place as an ordered, step-wise cascade to yield mature proteins. This process is called maturation. Displays maximal activity during the budding process just prior to particle release from the cell (Potential). Cleaves the translation initiation factor eIF4G leading to the inhibition of host cap-dependent translation. In terms of biological role, RT is a multifunctional enzyme that converts the viral dimeric RNA genome into dsDNA in the cytoplasm, shortly after virus entry into the cell. This enzyme displays a DNA polymerase activity that can copy either DNA or RNA templates, and a ribonuclease H (RNase H) activity that cleaves the RNA strand of RNA-DNA heteroduplexes in a partially processive 3' to 5' endonucleasic mode. Conversion of viral genomic RNA into dsDNA requires many steps. A tRNA binds to the primer-binding site (PBS) situated at the 5' end of the viral RNA. RT uses the 3' end of the tRNA primer to perform a short round of RNA-dependent minus-strand DNA synthesis. The reading proceeds through the U5 region and ends after the repeated (R) region which is present at both ends of viral RNA. The portion of the RNA-DNA heteroduplex is digested by the RNase H, resulting in a ssDNA product attached to the tRNA primer. This ssDNA/tRNA hybridizes with the identical R region situated at the 3' end of viral RNA. This template exchange, known as minus-strand DNA strong stop transfer, can be either intra- or intermolecular. RT uses the 3' end of this newly synthesized short ssDNA to perform the RNA-dependent minus-strand DNA synthesis of the whole template. RNase H digests the RNA template except for a polypurine tract (PPT) situated at the 5' end of the genome. It is not clear if both polymerase and RNase H activities are simultaneous. RNase H probably can proceed both in a polymerase-dependent (RNA cut into small fragments by the same RT performing DNA synthesis) and a polymerase-independent mode (cleavage of remaining RNA fragments by free RTs). Secondly, RT performs DNA-directed plus-strand DNA synthesis using the PPT that has not been removed by RNase H as primers. PPT and tRNA primers are then removed by RNase H. The 3' and 5' ssDNA PBS regions hybridize to form a circular dsDNA intermediate. Strand displacement synthesis by RT to the PBS and PPT ends produces a blunt ended, linear dsDNA copy of the viral genome that includes long terminal repeats (LTRs) at both ends. Its function is as follows. Catalyzes viral DNA integration into the host chromosome, by performing a series of DNA cutting and joining reactions. This enzyme activity takes place after virion entry into a cell and reverse transcription of the RNA genome in dsDNA. The first step in the integration process is 3' processing. This step requires a complex comprising the viral genome, matrix protein and integrase. This complex is called the pre-integration complex (PIC). The integrase protein removes 2 nucleotides from each 3' end of the viral DNA, leaving recessed CA OH's at the 3' ends. In the second step that requires cell division, the PIC enters cell nucleus. In the third step, termed strand transfer, the integrase protein joins the previously processed 3' ends to the 5' ends of strands of target cellular DNA at the site of integration. The last step is viral DNA integration into host chromosome. This chain is Gag-pol polyprotein (gag-pol), found in Mus musculus (Mouse).